The following is a 457-amino-acid chain: Aromatic amino acid transport protein AroP (457 aa).

The Cytoplasmic segment spans residues 1–19 (MMEGQQHGEQLKRGLKNRH). The helical transmembrane segment at 20–40 (IQLIALGGAIGTGLFLGSASV) threads the bilayer. Topologically, residues 41–42 (IQ) are periplasmic. Residues 43 to 63 (SAGPGIILGYAIAGFIAFLIM) form a helical membrane-spanning segment. Residues 64 to 86 (RQLGEMVVEEPVAGSFSHFAYKY) are Cytoplasmic-facing. The helical transmembrane segment at 87–107 (WGSFAGFASGWNYWVLYVLVA) threads the bilayer. The Periplasmic portion of the chain corresponds to 108–117 (MAELTAVGKY). A helical transmembrane segment spans residues 118 to 138 (IQFWYPEIPTWVSAAVFFVVI). The Cytoplasmic portion of the chain corresponds to 139–155 (NAINLTNVKVFGEMEFW). Residues 156-176 (FAIIKVIAVVAMIIFGGWLLF) traverse the membrane as a helical segment. The Periplasmic portion of the chain corresponds to 177–201 (SGNGGPQASVSNLWDQGGFLPHGFT). A helical membrane pass occupies residues 202–222 (GLVMMMAIIMFSFGGLELVGI). Over 223 to 240 (TAAEADNPEQSIPKATNQ) the chain is Cytoplasmic. The chain crosses the membrane as a helical span at residues 241-261 (VIYRILIFYIGSLAVLLSLMP). Topologically, residues 262-271 (WTRVTADTSP) are periplasmic. Residues 272 to 292 (FVLIFHELGDTFVANALNIVV) form a helical membrane-spanning segment. At 293–333 (LTAALSVYNSCVYCNSRMLFGLAQQGNAPKALASVDKRGVP) the chain is on the cytoplasmic side. Residues 334 to 354 (VNTILVSALVTALCVLINYLA) traverse the membrane as a helical segment. At 355–358 (PESA) the chain is on the periplasmic side. A helical membrane pass occupies residues 359–379 (FGLLMALVVSALVINWAMISL). Over 380 to 399 (AHMKFRRAKQEQGVVTRFPA) the chain is Cytoplasmic. Residues 400-420 (LLYPLGNWICLLFMAAVLVIM) form a helical membrane-spanning segment. At 421 to 425 (LMTPG) the chain is on the periplasmic side. The chain crosses the membrane as a helical span at residues 426 to 446 (MAISVYLIPVWLIVLGIGYLF). Over 447–457 (KEKTAKAVKAH) the chain is Cytoplasmic.

It belongs to the amino acid-polyamine-organocation (APC) superfamily. Amino acid transporter (AAT) (TC 2.A.3.1) family.

The protein resides in the cell inner membrane. The catalysed reaction is L-phenylalanine(in) + H(+)(in) = L-phenylalanine(out) + H(+)(out). It carries out the reaction L-tryptophan(in) + H(+)(in) = L-tryptophan(out) + H(+)(out). It catalyses the reaction L-tyrosine(in) + H(+)(in) = L-tyrosine(out) + H(+)(out). Its function is as follows. Permease that is involved in the active transport across the cytoplasmic membrane of all three aromatic amino acids, phenylalanine, tyrosine and tryptophan. The polypeptide is Aromatic amino acid transport protein AroP (aroP) (Shigella flexneri).